The chain runs to 260 residues: Uroplakin-1b (260 aa).

Over 1-12 (MAKDDSSVRCFQ) the chain is Cytoplasmic. Residues 13–38 (GLLIFGNVIVGMCGIALTAECIFFVS) form a helical membrane-spanning segment. Residues 39 to 60 (DQHSLYPLLEATDNDDIYGAAW) are Extracellular-facing. A helical membrane pass occupies residues 61–81 (IGMFVGICLFCLSVLGIVGIM). At 82–86 (KSNRK) the chain is on the cytoplasmic side. The helical transmembrane segment at 87–107 (ILLAYFILMFIVYGFEVASCI) threads the bilayer. Over 108–229 (TAATQRDFFT…ELISGPMNRH (122 aa)) the chain is Extracellular. The helical transmembrane segment at 230-250 (AWGVAWFGFAILCWTFWVLLG) threads the bilayer. At 251-260 (TMFYWSRIEY) the chain is on the cytoplasmic side.

Belongs to the tetraspanin (TM4SF) family. Heterodimer with uroplakin-3A (UPK3A) or uroplakin-3B (UPK3B).

It localises to the membrane. Component of the asymmetric unit membrane (AUM); a highly specialized biomembrane elaborated by terminally differentiated urothelial cells. This Neovison vison (American mink) protein is Uroplakin-1b (UPK1B).